Consider the following 398-residue polypeptide: Fatty-acid-binding protein 2 (398 aa).

Dodecanoate-binding residues include arginine 222, tyrosine 235, and serine 302.

This sequence belongs to the chalcone isomerase family. Expressed in developing cotyledons, young seedlings, roots, seeds, embryos, macrospores, preanthesis and tapetum. Restricted to developing and reproductive tissues.

The protein localises to the plastid. It localises to the chloroplast stroma. Functionally, fatty-acid-binding protein. Associates with saturated fatty acid. The sequence is that of Fatty-acid-binding protein 2 (FAP2) from Arabidopsis thaliana (Mouse-ear cress).